Reading from the N-terminus, the 306-residue chain is Sulfate adenylyltransferase subunit 2 (306 aa).

Belongs to the PAPS reductase family. CysD subfamily. In terms of assembly, heterodimer composed of CysD, the smaller subunit, and CysN.

It carries out the reaction sulfate + ATP + H(+) = adenosine 5'-phosphosulfate + diphosphate. Its pathway is sulfur metabolism; hydrogen sulfide biosynthesis; sulfite from sulfate: step 1/3. Functionally, with CysN forms the ATP sulfurylase (ATPS) that catalyzes the adenylation of sulfate producing adenosine 5'-phosphosulfate (APS) and diphosphate, the first enzymatic step in sulfur assimilation pathway. APS synthesis involves the formation of a high-energy phosphoric-sulfuric acid anhydride bond driven by GTP hydrolysis by CysN coupled to ATP hydrolysis by CysD. This chain is Sulfate adenylyltransferase subunit 2, found in Brucella anthropi (strain ATCC 49188 / DSM 6882 / CCUG 24695 / JCM 21032 / LMG 3331 / NBRC 15819 / NCTC 12168 / Alc 37) (Ochrobactrum anthropi).